The following is an 85-amino-acid chain: Large ribosomal subunit protein bL27 (85 aa).

The disordered stretch occupies residues 1–20 (MAHKKAGGSTRNGRDSESKR).

It belongs to the bacterial ribosomal protein bL27 family.

This chain is Large ribosomal subunit protein bL27, found in Yersinia pseudotuberculosis serotype O:1b (strain IP 31758).